We begin with the raw amino-acid sequence, 37 residues long: Omega-conotoxin-like S6.7 (37 aa).

The propeptide occupies 1-4; that stretch reads KSTS. 3 disulfide bridges follow: Cys5–Cys20, Cys12–Cys23, and Cys19–Cys32.

It belongs to the conotoxin O1 superfamily. In terms of tissue distribution, expressed by the venom duct.

It localises to the secreted. Its function is as follows. Omega-conotoxins act at presynaptic membranes, they bind and block voltage-gated calcium channels (Cav). This toxin blocks N-, P- and Q-type calcium channels. The polypeptide is Omega-conotoxin-like S6.7 (Conus striatus (Striated cone)).